We begin with the raw amino-acid sequence, 393 residues long: Glutamate 5-kinase 1 (393 aa).

Residue K17 participates in ATP binding. 3 residues coordinate substrate: S57, D144, and N156. An ATP-binding site is contributed by 176 to 177 (SD). A PUA domain is found at 282–359 (AGSLSIDAGA…AEIAAILGYA (78 aa)).

The protein belongs to the glutamate 5-kinase family.

It localises to the cytoplasm. The enzyme catalyses L-glutamate + ATP = L-glutamyl 5-phosphate + ADP. It functions in the pathway amino-acid biosynthesis; L-proline biosynthesis; L-glutamate 5-semialdehyde from L-glutamate: step 1/2. In terms of biological role, catalyzes the transfer of a phosphate group to glutamate to form L-glutamate 5-phosphate. The sequence is that of Glutamate 5-kinase 1 from Rhizobium meliloti (strain 1021) (Ensifer meliloti).